A 57-amino-acid chain; its full sequence is COP9 signalosome complex subunit 9 (57 aa).

This sequence belongs to the CSN9 family. As to quaternary structure, component of the CSN complex, probably composed of cops1, cops2, cops3, cops4, cops5, cops6, cops7, cops8 and cops9.

The protein resides in the nucleus. It localises to the cytoplasm. It is found in the nucleoplasm. Component of the COP9 signalosome complex (CSN), a complex involved in various cellular and developmental processes. The CSN complex is an essential regulator of the ubiquitin (Ubl) conjugation pathway by mediating the deneddylation of the cullin subunits of SCF-type E3 ligase complexes, leading to decrease the Ubl ligase activity. May play a role in cell proliferation. The chain is COP9 signalosome complex subunit 9 from Xenopus laevis (African clawed frog).